The sequence spans 394 residues: Phosphoglycerate kinase (394 aa).

Residues 21 to 23 (DFN), arginine 36, 59 to 62 (HLGR), arginine 118, and arginine 151 contribute to the substrate site. Residues lysine 202, glycine 293, glutamate 324, and 350–353 (GGDS) each bind ATP.

The protein belongs to the phosphoglycerate kinase family. In terms of assembly, monomer.

Its subcellular location is the cytoplasm. It carries out the reaction (2R)-3-phosphoglycerate + ATP = (2R)-3-phospho-glyceroyl phosphate + ADP. Its pathway is carbohydrate degradation; glycolysis; pyruvate from D-glyceraldehyde 3-phosphate: step 2/5. The sequence is that of Phosphoglycerate kinase from Exiguobacterium sp. (strain ATCC BAA-1283 / AT1b).